Reading from the N-terminus, the 201-residue chain is Holliday junction branch migration complex subunit RuvA (201 aa).

The segment at 1–63 (MIASVRGEVL…EDSMTLYGFA (63 aa)) is domain I. Residues 64–142 (DTEARDLFGL…LVPVQAGPPG (79 aa)) form a domain II region. The segment at 143 to 153 (STPAVAATPVR) is flexible linker. Residues 153–201 (REQVVEALTGLGFPLKQAEQALDTVLAEQPAADTSTALRAALSLLGKNR) are domain III.

Belongs to the RuvA family. In terms of assembly, homotetramer. Forms an RuvA(8)-RuvB(12)-Holliday junction (HJ) complex. HJ DNA is sandwiched between 2 RuvA tetramers; dsDNA enters through RuvA and exits via RuvB. An RuvB hexamer assembles on each DNA strand where it exits the tetramer. Each RuvB hexamer is contacted by two RuvA subunits (via domain III) on 2 adjacent RuvB subunits; this complex drives branch migration. In the full resolvosome a probable DNA-RuvA(4)-RuvB(12)-RuvC(2) complex forms which resolves the HJ.

Its subcellular location is the cytoplasm. Its function is as follows. The RuvA-RuvB-RuvC complex processes Holliday junction (HJ) DNA during genetic recombination and DNA repair, while the RuvA-RuvB complex plays an important role in the rescue of blocked DNA replication forks via replication fork reversal (RFR). RuvA specifically binds to HJ cruciform DNA, conferring on it an open structure. The RuvB hexamer acts as an ATP-dependent pump, pulling dsDNA into and through the RuvAB complex. HJ branch migration allows RuvC to scan DNA until it finds its consensus sequence, where it cleaves and resolves the cruciform DNA. The chain is Holliday junction branch migration complex subunit RuvA from Nocardia farcinica (strain IFM 10152).